Here is a 123-residue protein sequence, read N- to C-terminus: Small ribosomal subunit protein uS12c (123 aa).

The protein belongs to the universal ribosomal protein uS12 family. Part of the 30S ribosomal subunit.

It localises to the plastid. Its subcellular location is the chloroplast. Its function is as follows. With S4 and S5 plays an important role in translational accuracy. Located at the interface of the 30S and 50S subunits. The polypeptide is Small ribosomal subunit protein uS12c (rps12) (Pinus thunbergii (Japanese black pine)).